The chain runs to 241 residues: MRKIIIAGNWKMYKTQAEALEFVQVFKSKIEDTDESREIVLCAPFTDLGAMSKNLHGSRIKLGAQNVHWEEAGAYTGEISGAMLTEIGVSYVIVGHSERRQYFGDTDETVNLRVLAAQKYGLIPILCVGESKSQRDAGETEKIIINQLKRDLVDVDQNKLVIAYEPIWAIGTGDTCESSEANRVIGIIREQLTNKNVSIQYGGSVKPGNIDEIMKQSEIDGALVGGASLNPADFAQIVNYK.

9 to 11 is a substrate binding site; sequence NWK. The active-site Electrophile is the histidine 96. The Proton acceptor role is filled by glutamate 165. Residues glycine 171, serine 204, and 225–226 contribute to the substrate site; that span reads GG.

The protein belongs to the triosephosphate isomerase family. In terms of assembly, homodimer.

The protein localises to the cytoplasm. It carries out the reaction D-glyceraldehyde 3-phosphate = dihydroxyacetone phosphate. It functions in the pathway carbohydrate biosynthesis; gluconeogenesis. The protein operates within carbohydrate degradation; glycolysis; D-glyceraldehyde 3-phosphate from glycerone phosphate: step 1/1. Involved in the gluconeogenesis. Catalyzes stereospecifically the conversion of dihydroxyacetone phosphate (DHAP) to D-glyceraldehyde-3-phosphate (G3P). This is Triosephosphate isomerase from Gloeothece citriformis (strain PCC 7424) (Cyanothece sp. (strain PCC 7424)).